Here is an 863-residue protein sequence, read N- to C-terminus: Alanine--tRNA ligase (863 aa).

Residues histidine 552, histidine 556, cysteine 654, and histidine 658 each coordinate Zn(2+).

This sequence belongs to the class-II aminoacyl-tRNA synthetase family. Zn(2+) is required as a cofactor.

Its subcellular location is the cytoplasm. The enzyme catalyses tRNA(Ala) + L-alanine + ATP = L-alanyl-tRNA(Ala) + AMP + diphosphate. Its function is as follows. Catalyzes the attachment of alanine to tRNA(Ala) in a two-step reaction: alanine is first activated by ATP to form Ala-AMP and then transferred to the acceptor end of tRNA(Ala). Also edits incorrectly charged Ser-tRNA(Ala) and Gly-tRNA(Ala) via its editing domain. This is Alanine--tRNA ligase from Halorhodospira halophila (strain DSM 244 / SL1) (Ectothiorhodospira halophila (strain DSM 244 / SL1)).